Consider the following 294-residue polypeptide: Bifunctional protein FolD (294 aa).

Residues 176–178, serine 201, and isoleucine 242 each bind NADP(+); that span reads GAS.

The protein belongs to the tetrahydrofolate dehydrogenase/cyclohydrolase family. As to quaternary structure, homodimer.

It catalyses the reaction (6R)-5,10-methylene-5,6,7,8-tetrahydrofolate + NADP(+) = (6R)-5,10-methenyltetrahydrofolate + NADPH. The enzyme catalyses (6R)-5,10-methenyltetrahydrofolate + H2O = (6R)-10-formyltetrahydrofolate + H(+). It participates in one-carbon metabolism; tetrahydrofolate interconversion. In terms of biological role, catalyzes the oxidation of 5,10-methylenetetrahydrofolate to 5,10-methenyltetrahydrofolate and then the hydrolysis of 5,10-methenyltetrahydrofolate to 10-formyltetrahydrofolate. This chain is Bifunctional protein FolD, found in Bordetella petrii (strain ATCC BAA-461 / DSM 12804 / CCUG 43448).